The chain runs to 218 residues: MSRISAEAEKVRHALIEKGIETPMIALTKSKNERRIGIENRMREVMQLIGLDLTDDSLEETPVRLAKMFIDEIFSGLDYTNFPKITNIENRMKVSEMVLVNDVTLTSTCEHHFVTIDGLVSVAYYPKKWVIGLSKINRVVQFFAQRPQVQERLTEQILLAFQTILETEDVAVYMKATHFCVKCRGIKDTNSYTVTSAFGGVFLEDRETRKEFLSLINK.

Positions 109, 112, and 180 each coordinate Zn(2+).

This sequence belongs to the GTP cyclohydrolase I family. In terms of assembly, toroid-shaped homodecamer, composed of two pentamers of five dimers.

The enzyme catalyses GTP + H2O = 7,8-dihydroneopterin 3'-triphosphate + formate + H(+). The protein operates within cofactor biosynthesis; 7,8-dihydroneopterin triphosphate biosynthesis; 7,8-dihydroneopterin triphosphate from GTP: step 1/1. In Mannheimia succiniciproducens (strain KCTC 0769BP / MBEL55E), this protein is GTP cyclohydrolase 1.